Reading from the N-terminus, the 168-residue chain is Small ribosomal subunit protein uS4 (168 aa).

In terms of domain architecture, S4 RNA-binding spans 103–167 (RRLQTIVYKK…SPFKKSIEEK (65 aa)).

It belongs to the universal ribosomal protein uS4 family. In terms of assembly, part of the 30S ribosomal subunit. Contacts protein S5. The interaction surface between S4 and S5 is involved in control of translational fidelity.

Its function is as follows. One of the primary rRNA binding proteins, it binds directly to 16S rRNA where it nucleates assembly of the body of the 30S subunit. In terms of biological role, with S5 and S12 plays an important role in translational accuracy. This chain is Small ribosomal subunit protein uS4, found in Staphylothermus marinus (strain ATCC 43588 / DSM 3639 / JCM 9404 / F1).